Reading from the N-terminus, the 1006-residue chain is Unconventional myosin-Id (1006 aa).

N-acetylalanine is present on Ala-2. Positions 9–695 (FGKADFVLMD…TLFTLEELRA (687 aa)) constitute a Myosin motor domain. Residue 102-109 (GESGAGKT) coordinates ATP. Residue Ser-200 is modified to Phosphoserine. The residue at position 536 (Tyr-536) is a Phosphotyrosine. The interval 572 to 594 (MIALVDNLASKEPYYVRCIKPND) is actin-binding. IQ domains are found at residues 699 to 719 (VRIV…MRYK) and 721 to 741 (TKAA…SYIH). The region spanning 812–1005 (GQRADLGLQR…RSGFILSVPG (194 aa)) is the TH1 domain.

This sequence belongs to the TRAFAC class myosin-kinesin ATPase superfamily. Myosin family. Interacts (via the two IQ motifs) with calmodulin. Binds an additional calmodulin chain via a third, C-terminal region. Interacts with F-actin.

It is found in the cytoplasm. The protein resides in the perikaryon. The protein localises to the cell projection. It localises to the dendrite. Its subcellular location is the early endosome. It is found in the cell cortex. Its function is as follows. Unconventional myosin that functions as actin-based motor protein with ATPase activity. Plays a role in endosomal protein trafficking, and especially in the transfer of cargo proteins from early to recycling endosomes. Required for normal planar cell polarity in ciliated tracheal cells, for normal rotational polarity of cilia, and for coordinated, unidirectional ciliary movement in the trachea. Required for normal, polarized cilia organization in brain ependymal epithelial cells. This is Unconventional myosin-Id (MYO1D) from Bos taurus (Bovine).